Consider the following 431-residue polypeptide: Tyrosine--tRNA ligase (431 aa).

Y34 lines the L-tyrosine pocket. A 'HIGH' region motif is present at residues 39–48 (PTADSLHIGH). L-tyrosine is bound by residues Y171 and Q175. The short motif at 231–235 (KFGKT) is the 'KMSKS' region element. K234 lines the ATP pocket. The 70-residue stretch at 353–422 (INAVEALVKT…GKYTILRRGK (70 aa)) folds into the S4 RNA-binding domain.

The protein belongs to the class-I aminoacyl-tRNA synthetase family. TyrS type 1 subfamily. In terms of assembly, homodimer.

It localises to the cytoplasm. It carries out the reaction tRNA(Tyr) + L-tyrosine + ATP = L-tyrosyl-tRNA(Tyr) + AMP + diphosphate + H(+). In terms of biological role, catalyzes the attachment of tyrosine to tRNA(Tyr) in a two-step reaction: tyrosine is first activated by ATP to form Tyr-AMP and then transferred to the acceptor end of tRNA(Tyr). The protein is Tyrosine--tRNA ligase of Neisseria gonorrhoeae (strain ATCC 700825 / FA 1090).